The primary structure comprises 222 residues: Sugar fermentation stimulation protein homolog (222 aa).

The protein belongs to the SfsA family.

The sequence is that of Sugar fermentation stimulation protein homolog from Thermoplasma acidophilum (strain ATCC 25905 / DSM 1728 / JCM 9062 / NBRC 15155 / AMRC-C165).